A 576-amino-acid polypeptide reads, in one-letter code: Lysine--tRNA ligase, mitochondrial (576 aa).

Residues 1–30 (MNVLLKRRSLTFAPRWLWCKCRSSRSRPYS) constitute a mitochondrion transit peptide.

This sequence belongs to the class-II aminoacyl-tRNA synthetase family.

It is found in the mitochondrion matrix. The enzyme catalyses tRNA(Lys) + L-lysine + ATP = L-lysyl-tRNA(Lys) + AMP + diphosphate. Functionally, catalyzes the attachment of lysine to tRNA(Lys) in the mitochondrion. This Saccharomyces cerevisiae (strain ATCC 204508 / S288c) (Baker's yeast) protein is Lysine--tRNA ligase, mitochondrial (MSK1).